We begin with the raw amino-acid sequence, 395 residues long: Transcription termination/antitermination protein NusA (395 aa).

The 65-residue stretch at 137–201 folds into the S1 motif domain; that stretch reads NSVLMGQVIL…TKKGLLLELS (65 aa). 2 KH domains span residues 243–291 and 331–378; these read SHNA…TLAL and KVRL…NESE.

The protein belongs to the NusA family. In terms of assembly, monomer. Binds directly to the core enzyme of the DNA-dependent RNA polymerase and to nascent RNA.

It localises to the cytoplasm. In terms of biological role, participates in both transcription termination and antitermination. In Helicobacter pylori (strain ATCC 700392 / 26695) (Campylobacter pylori), this protein is Transcription termination/antitermination protein NusA.